The following is a 179-amino-acid chain: Large ribosomal subunit protein uL5 (179 aa).

This sequence belongs to the universal ribosomal protein uL5 family. Part of the 50S ribosomal subunit; part of the 5S rRNA/L5/L18/L25 subcomplex. Contacts the 5S rRNA and the P site tRNA. Forms a bridge to the 30S subunit in the 70S ribosome.

Its function is as follows. This is one of the proteins that bind and probably mediate the attachment of the 5S RNA into the large ribosomal subunit, where it forms part of the central protuberance. In the 70S ribosome it contacts protein S13 of the 30S subunit (bridge B1b), connecting the 2 subunits; this bridge is implicated in subunit movement. Contacts the P site tRNA; the 5S rRNA and some of its associated proteins might help stabilize positioning of ribosome-bound tRNAs. This chain is Large ribosomal subunit protein uL5, found in Citrobacter koseri (strain ATCC BAA-895 / CDC 4225-83 / SGSC4696).